A 196-amino-acid polypeptide reads, in one-letter code: Transcriptional regulatory protein UhpA (196 aa).

Positions T3–A116 constitute a Response regulatory domain. Position 54 is a 4-aspartylphosphate (D54). The HTH luxR-type domain maps to A131–W196. The H-T-H motif DNA-binding region spans V155–A174.

In terms of processing, phosphorylated and dephosphorylated by UhpB.

The protein resides in the cytoplasm. With respect to regulation, phosphorylation by UhpB enhances DNA binding activity. Its function is as follows. Part of the UhpABC signaling cascade that controls the expression of the hexose phosphate transporter UhpT. Activates the transcription of the uhpT gene. Acts by binding specifically to the uhpT promoter region. The protein is Transcriptional regulatory protein UhpA (uhpA) of Escherichia coli (strain K12).